Consider the following 333-residue polypeptide: Complement C1q and tumor necrosis factor-related protein 9B (333 aa).

A signal peptide spans 1–19 (MRIWWLLLAIEICTGNINS). Collagen-like domains are found at residues 24 to 82 (RQGH…DGKV), 95 to 154 (GSPG…PGPM), and 155 to 191 (GPIG…GEKG). Residues 24–189 (RQGHPGIPGN…IRGWKGDRGE (166 aa)) are disordered. Positions 26–40 (GHPGIPGNPGHNGLP) are enriched in low complexity. Composition is skewed to basic and acidic residues over residues 42–55 (RDGR…KGDA) and 69–88 (TSGE…KGIK). The 137-residue stretch at 197–333 (LVLPKSAFTV…FTGFLLFSSQ (137 aa)) folds into the C1q domain.

In terms of assembly, interacts with CTRP9A and ADIPOQ. Forms heterotrimers and heterooligomeric complexes with CTRP9A. Expressed at low levels. Not expressed in adipose tissues.

Its subcellular location is the secreted. In terms of biological role, probable adipokine. Activates AMPK, AKT, and p44/42 MAPK signaling pathways. This Homo sapiens (Human) protein is Complement C1q and tumor necrosis factor-related protein 9B (C1QTNF9B).